We begin with the raw amino-acid sequence, 647 residues long: Chaperone protein DnaK (647 aa).

Phosphothreonine; by autocatalysis is present on Thr-198. Positions 606-634 (GASAEGMDPNQFQQGADNAGESNQADDDV) are disordered. A compositionally biased stretch (polar residues) spans 615-628 (NQFQQGADNAGESN).

It belongs to the heat shock protein 70 family.

Functionally, acts as a chaperone. The sequence is that of Chaperone protein DnaK from Psychrobacter cryohalolentis (strain ATCC BAA-1226 / DSM 17306 / VKM B-2378 / K5).